Here is a 365-residue protein sequence, read N- to C-terminus: tRNA/tmRNA (uracil-C(5))-methyltransferase (365 aa).

S-adenosyl-L-methionine contacts are provided by Gln189, Tyr217, Asn222, Glu238, and Asp298. The active-site Nucleophile is Cys323. The Proton acceptor role is filled by Glu357.

The protein belongs to the class I-like SAM-binding methyltransferase superfamily. RNA M5U methyltransferase family. TrmA subfamily.

The enzyme catalyses uridine(54) in tRNA + S-adenosyl-L-methionine = 5-methyluridine(54) in tRNA + S-adenosyl-L-homocysteine + H(+). The catalysed reaction is uridine(341) in tmRNA + S-adenosyl-L-methionine = 5-methyluridine(341) in tmRNA + S-adenosyl-L-homocysteine + H(+). Its function is as follows. Dual-specificity methyltransferase that catalyzes the formation of 5-methyluridine at position 54 (m5U54) in all tRNAs, and that of position 341 (m5U341) in tmRNA (transfer-mRNA). The protein is tRNA/tmRNA (uracil-C(5))-methyltransferase of Shewanella piezotolerans (strain WP3 / JCM 13877).